The following is a 270-amino-acid chain: Hydroxyethylthiazole kinase (270 aa).

Residue Met47 coordinates substrate. Residues Arg123 and Thr169 each coordinate ATP. A substrate-binding site is contributed by Gly196.

This sequence belongs to the Thz kinase family. The cofactor is Mg(2+).

The enzyme catalyses 5-(2-hydroxyethyl)-4-methylthiazole + ATP = 4-methyl-5-(2-phosphooxyethyl)-thiazole + ADP + H(+). The protein operates within cofactor biosynthesis; thiamine diphosphate biosynthesis; 4-methyl-5-(2-phosphoethyl)-thiazole from 5-(2-hydroxyethyl)-4-methylthiazole: step 1/1. Catalyzes the phosphorylation of the hydroxyl group of 4-methyl-5-beta-hydroxyethylthiazole (THZ). In Roseiflexus sp. (strain RS-1), this protein is Hydroxyethylthiazole kinase.